Consider the following 158-residue polypeptide: 2-C-methyl-D-erythritol 2,4-cyclodiphosphate synthase (158 aa).

The a divalent metal cation site is built by Asp9 and His11. 4-CDP-2-C-methyl-D-erythritol 2-phosphate is bound by residues 9-11 (DVH) and 35-36 (HS). A divalent metal cation is bound at residue His43. Residues 57–59 (DIG) and Arg143 each bind 4-CDP-2-C-methyl-D-erythritol 2-phosphate.

This sequence belongs to the IspF family. Homotrimer. Requires a divalent metal cation as cofactor.

It catalyses the reaction 4-CDP-2-C-methyl-D-erythritol 2-phosphate = 2-C-methyl-D-erythritol 2,4-cyclic diphosphate + CMP. It functions in the pathway isoprenoid biosynthesis; isopentenyl diphosphate biosynthesis via DXP pathway; isopentenyl diphosphate from 1-deoxy-D-xylulose 5-phosphate: step 4/6. Functionally, involved in the biosynthesis of isopentenyl diphosphate (IPP) and dimethylallyl diphosphate (DMAPP), two major building blocks of isoprenoid compounds. Catalyzes the conversion of 4-diphosphocytidyl-2-C-methyl-D-erythritol 2-phosphate (CDP-ME2P) to 2-C-methyl-D-erythritol 2,4-cyclodiphosphate (ME-CPP) with a corresponding release of cytidine 5-monophosphate (CMP). The protein is 2-C-methyl-D-erythritol 2,4-cyclodiphosphate synthase of Chromobacterium violaceum (strain ATCC 12472 / DSM 30191 / JCM 1249 / CCUG 213 / NBRC 12614 / NCIMB 9131 / NCTC 9757 / MK).